Here is a 359-residue protein sequence, read N- to C-terminus: Glutamate 5-kinase (359 aa).

ATP is bound at residue Lys7. The substrate site is built by Ser47, Asp135, and Asn147. ATP is bound at residue 202–208; sequence SGGITSK. Residues 266-343 form the PUA domain; it reads KGSIFINEGA…DQLEDVLGYS (78 aa).

Belongs to the glutamate 5-kinase family.

It localises to the cytoplasm. It catalyses the reaction L-glutamate + ATP = L-glutamyl 5-phosphate + ADP. It participates in amino-acid biosynthesis; L-proline biosynthesis; L-glutamate 5-semialdehyde from L-glutamate: step 1/2. Its function is as follows. Catalyzes the transfer of a phosphate group to glutamate to form L-glutamate 5-phosphate. The protein is Glutamate 5-kinase of Kosmotoga olearia (strain ATCC BAA-1733 / DSM 21960 / TBF 19.5.1).